A 151-amino-acid polypeptide reads, in one-letter code: Ribosomal RNA large subunit methyltransferase H (151 aa).

Residues leucine 73, glycine 100, and leucine 119–leucine 124 each bind S-adenosyl-L-methionine.

Belongs to the RNA methyltransferase RlmH family. Homodimer.

The protein resides in the cytoplasm. It carries out the reaction pseudouridine(1915) in 23S rRNA + S-adenosyl-L-methionine = N(3)-methylpseudouridine(1915) in 23S rRNA + S-adenosyl-L-homocysteine + H(+). Its function is as follows. Specifically methylates the pseudouridine at position 1915 (m3Psi1915) in 23S rRNA. This Campylobacter lari (strain RM2100 / D67 / ATCC BAA-1060) protein is Ribosomal RNA large subunit methyltransferase H.